The following is a 323-amino-acid chain: 8-oxo-dGDP phosphatase NUDT18 (323 aa).

The Nudix hydrolase domain maps to 37–167; the sequence is RLRKNVCYVV…DVLHLVELGA (131 aa). Leucine 58 contacts Mg(2+). Residues 76-97 carry the Nudix box motif; that stretch reads GRMEPGETIVEAMQREVKEEAG.

Belongs to the Nudix hydrolase family. The cofactor is Mn(2+). Mg(2+) is required as a cofactor.

The enzyme catalyses 8-oxo-dGDP + H2O = 8-oxo-dGMP + phosphate + H(+). It carries out the reaction 8-oxo-dADP + H2O = 8-oxo-dAMP + phosphate + H(+). It catalyses the reaction 2-oxo-dADP + H2O = 2-oxo-dAMP + phosphate + H(+). The catalysed reaction is 8-oxo-GDP + H2O = 8-oxo-GMP + phosphate + H(+). Functionally, mediates the hydrolysis of oxidized nucleoside diphosphate derivatives. Hydrolyzes 8-oxo-7,8-dihydroguanine (8-oxo-Gua)-containing deoxyribo- and ribonucleoside diphosphates to the monophosphates. Hydrolyzes 8-oxo-dGDP and 8-oxo-GDP with the same efficiencies. Also hydrolyzes 8-OH-dADP and 2-OH-dADP. Exhibited no or minimal hydrolysis activity against 8-oxo-dGTP, 8-oxo-GTP, dGTP, GTP, dGDP and GDP. Probably removes oxidized guanine nucleotides from both the DNA and RNA precursor pools. This Mus musculus (Mouse) protein is 8-oxo-dGDP phosphatase NUDT18.